We begin with the raw amino-acid sequence, 131 residues long: Fumarate reductase subunit C (131 aa).

3 helical membrane passes run 30–50 (EGTA…LFAL), 61–81 (IGFL…AAAL), and 110–130 (IKGL…VALF).

The protein belongs to the FrdC family. In terms of assembly, part of an enzyme complex containing four subunits: a flavoprotein (FrdA), an iron-sulfur protein (FrdB), and two hydrophobic anchor proteins (FrdC and FrdD).

It is found in the cell inner membrane. Two distinct, membrane-bound, FAD-containing enzymes are responsible for the catalysis of fumarate and succinate interconversion; fumarate reductase is used in anaerobic growth, and succinate dehydrogenase is used in aerobic growth. Anchors the catalytic components of the fumarate reductase complex to the cell inner membrane, binds quinones. This Klebsiella pneumoniae subsp. pneumoniae (strain ATCC 700721 / MGH 78578) protein is Fumarate reductase subunit C.